The following is a 345-amino-acid chain: Ribonucleoside-diphosphate reductase subunit beta (345 aa).

3 residues coordinate Fe cation: aspartate 88, glutamate 118, and histidine 121. Residue tyrosine 125 is part of the active site. 3 residues coordinate Fe cation: glutamate 185, glutamate 219, and histidine 222.

This sequence belongs to the ribonucleoside diphosphate reductase small chain family. As to quaternary structure, tetramer of two alpha and two beta subunits. Fe cation serves as cofactor.

The catalysed reaction is a 2'-deoxyribonucleoside 5'-diphosphate + [thioredoxin]-disulfide + H2O = a ribonucleoside 5'-diphosphate + [thioredoxin]-dithiol. Its function is as follows. Provides the precursors necessary for DNA synthesis. Catalyzes the biosynthesis of deoxyribonucleotides from the corresponding ribonucleotides. The chain is Ribonucleoside-diphosphate reductase subunit beta (nrdB) from Halalkalibacterium halodurans (strain ATCC BAA-125 / DSM 18197 / FERM 7344 / JCM 9153 / C-125) (Bacillus halodurans).